A 191-amino-acid polypeptide reads, in one-letter code: Bcl-2-like protein 10 (191 aa).

The short motif at 79 to 98 (LSKDQDFSWSQLVMLLAFAG) is the BH1 element. Residue lysine 112 forms a Glycyl lysine isopeptide (Lys-Gly) (interchain with G-Cter in ubiquitin) linkage. The BH2 signature appears at 144–155 (RLEALGGWDGFC). Residues 166–183 (FWRRLLIQAFLSGFFATA) traverse the membrane as a helical segment.

The protein belongs to the Bcl-2 family. In terms of assembly, interacts with BAX. Interacts with BCL2 and BCL2L1/BCLX. Interacts with APAF1. Interacts with ITPR1, ITPR2 and ITPR3; the interaction with ITPR1 is increased in the presence of AHCLY1. Interacts with AHCYL1. Interacts with HIP1R (via ENTH and I/LWEQ domains). Interacts with CASP9. Interacts with BCL2L11/BIM. Interacts with BIK. Interacts with UBQLN4. Interacts with NME2/NM23-H2. Interacts with PMAIP1/NOXA. Interacts with TPX2. Interacts with UBQLN1; in the cytoplasm. Interacts (via BH1 domain) with BECN1. Ca(2+) serves as cofactor. Monoubiquitinated by UBQLN1; results in stabilization of BCL2L10 protein abundance and in relocalization from mitochondria to cytoplasm. In terms of tissue distribution, expressed in multiple embryonic tissues. Restricted to the ovary and testis in adult mice.

It localises to the mitochondrion. The protein localises to the nucleus membrane. Its subcellular location is the endoplasmic reticulum. It is found in the cytoplasm. The protein resides in the cytoskeleton. It localises to the spindle. Promotes cell survival by suppressing apoptosis induced by BAX but not BAK. Increases binding of AHCYL1/IRBIT to ITPR1. Reduces ITPR1-mediated calcium release from the endoplasmic reticulum cooperatively with AHCYL1/IRBIT under normal cellular conditions. Under apoptotic stress conditions, dissociates from ITPR1 and is displaced from mitochondria-associated endoplasmic reticulum membranes, leading to increased Ca(2+) transfer to mitochondria which promotes apoptosis. Required for the correct formation of the microtubule organizing center during oocyte cell division, potentially via regulation of protein abundance and localization of other microtubule organizing center components such as AURKA and TPX2. The protein is Bcl-2-like protein 10 of Mus musculus (Mouse).